Reading from the N-terminus, the 252-residue chain is 5'-nucleotidase SurE (252 aa).

Residues D8, D9, S39, and N91 each coordinate a divalent metal cation.

Belongs to the SurE nucleotidase family. Requires a divalent metal cation as cofactor.

It localises to the cytoplasm. The enzyme catalyses a ribonucleoside 5'-phosphate + H2O = a ribonucleoside + phosphate. Its function is as follows. Nucleotidase that shows phosphatase activity on nucleoside 5'-monophosphates. This chain is 5'-nucleotidase SurE, found in Legionella pneumophila (strain Paris).